Consider the following 270-residue polypeptide: 4-hydroxy-tetrahydrodipicolinate reductase (270 aa).

Residues 8–13 (GALGRM), aspartate 34, 102–104 (GTT), and 128–131 (SQNY) contribute to the NAD(+) site. Histidine 160 serves as the catalytic Proton donor/acceptor. Residue histidine 161 participates in (S)-2,3,4,5-tetrahydrodipicolinate binding. Residue lysine 164 is the Proton donor of the active site. 170–171 (GT) is a (S)-2,3,4,5-tetrahydrodipicolinate binding site.

This sequence belongs to the DapB family.

It is found in the cytoplasm. The catalysed reaction is (S)-2,3,4,5-tetrahydrodipicolinate + NAD(+) + H2O = (2S,4S)-4-hydroxy-2,3,4,5-tetrahydrodipicolinate + NADH + H(+). It carries out the reaction (S)-2,3,4,5-tetrahydrodipicolinate + NADP(+) + H2O = (2S,4S)-4-hydroxy-2,3,4,5-tetrahydrodipicolinate + NADPH + H(+). The protein operates within amino-acid biosynthesis; L-lysine biosynthesis via DAP pathway; (S)-tetrahydrodipicolinate from L-aspartate: step 4/4. Its function is as follows. Catalyzes the conversion of 4-hydroxy-tetrahydrodipicolinate (HTPA) to tetrahydrodipicolinate. The chain is 4-hydroxy-tetrahydrodipicolinate reductase from Methanococcus maripaludis (strain C5 / ATCC BAA-1333).